The sequence spans 180 residues: Non-structural protein 4 (180 aa).

2 consecutive transmembrane segments (helical) span residues 16-36 (VCVHKMTLLIILIISAAVTVI) and 52-72 (IVSTITDGINATIISVMAILG).

Its subcellular location is the host membrane. The polypeptide is Non-structural protein 4 (Segment-11) (Banna virus (BAV)).